The following is a 378-amino-acid chain: Long-chain-fatty-acid--luciferin-component ligase (378 aa).

Belongs to the LuxE family.

It catalyses the reaction a long-chain fatty acid + L-cysteinyl-[protein] + ATP = an S-(long-chain fatty acyl)-L-cysteinyl-[protein] + AMP + diphosphate. The protein operates within lipid metabolism; fatty acid reduction for biolumincescence. Functionally, acyl-protein synthetase activates tetradecanoic acid. It is a component of the fatty acid reductase complex responsible for converting tetradecanoic acid to the aldehyde which serves as substrate in the luciferase-catalyzed reaction. This chain is Long-chain-fatty-acid--luciferin-component ligase, found in Aliivibrio fischeri (Vibrio fischeri).